A 634-amino-acid polypeptide reads, in one-letter code: Kelch-like protein 22 (634 aa).

Ala-2 bears the N-acetylalanine mark. One can recognise a BTB domain in the interval 50–117; it reads FDVVLVVEGR…IYTSELELSL (68 aa). Kelch repeat units follow at residues 299–349, 350–399, 400–446, 448–493, 494–544, and 545–593; these read CVVG…VLNN, FVYL…VVGR, YIYA…TLEG, MYIT…TLLN, KLYV…VLDN, and RIYV…VLTL. Phosphothreonine is present on Thr-463. Position 466 is a phosphotyrosine (Tyr-466). Thr-475 is subject to Phosphothreonine. The tract at residues 600-634 is disordered; sequence EPPRGTPDRSQADPDFASEVMSVSDWEEFDNSSED. Thr-605 is modified (phosphothreonine). Over residues 624–634 the composition is skewed to acidic residues; that stretch reads DWEEFDNSSED.

As to quaternary structure, component of the BCR(KLHL22) E3 ubiquitin ligase complex, at least composed of CUL3, KLHL22 and RBX1. Interacts with PLK1. Interacts with DEPDC5 (via DEP domain); the interaction depends on amino acid availability. Interacts with YWHAE; required for the nuclear localization of KLHL22 upon amino acid starvation.

It localises to the cytoplasm. It is found in the cytosol. The protein resides in the cytoskeleton. The protein localises to the microtubule organizing center. Its subcellular location is the centrosome. It localises to the spindle. It is found in the nucleus. The protein resides in the lysosome. The protein operates within protein modification; protein ubiquitination. In terms of biological role, substrate-specific adapter of a BCR (BTB-CUL3-RBX1) E3 ubiquitin ligase complex required for chromosome alignment and localization of PLK1 at kinetochores. The BCR(KLHL22) ubiquitin ligase complex mediates monoubiquitination of PLK1, leading to PLK1 dissociation from phosphoreceptor proteins and subsequent removal from kinetochores, allowing silencing of the spindle assembly checkpoint (SAC) and chromosome segregation. Monoubiquitination of PLK1 does not lead to PLK1 degradation. The BCR(KLHL22) ubiquitin ligase complex is also responsible for the amino acid-stimulated 'Lys-48' polyubiquitination and proteasomal degradation of DEPDC5. Through the degradation of DEPDC5, releases the GATOR1 complex-mediated inhibition of the TORC1 pathway. It is therefore an amino acid-dependent activator within the amino acid-sensing branch of the TORC1 pathway, indirectly regulating different cellular processes including cell growth and autophagy. The sequence is that of Kelch-like protein 22 from Homo sapiens (Human).